Consider the following 149-residue polypeptide: MFQDTEEKPRTLHDLCQALETTIHNIELQCVECKKPLQRSEVYDFAFADLTVVYREGNPFGICKLCLRFLSKISEYRHYNYSVYGNTLEQTVKKPLNEILIRCIICQRPLCPQEKKRHVDLNKRFHNISGRWAGRCAACWRSRRRETAL.

Zinc fingers lie at residues 30–66 (CVEC…CKLC) and 103–139 (CIIC…CAAC). Positions 147 to 149 (TAL) match the PDZ-binding domain motif.

It belongs to the papillomaviridae E6 protein family. As to quaternary structure, forms homodimers. Interacts with ubiquitin-protein ligase UBE3A/E6-AP and thus forms a complex with human TP53. Interacts with human NFX1 and MAGI3. Interacts with human IRF3; this interaction inhibits the establishment of antiviral state. Interacts with human TYK2; this interaction inhibits JAK-STAT activation by interferon alpha. Interacts with host DLG1; this interaction leads to the proteasomal degradation of DLG1.

It localises to the host cytoplasm. The protein localises to the host nucleus. In terms of biological role, this protein may be involved in the oncogenic potential of this virus (cervical neoplasia-associated virus). Plays a major role in the induction and maintenance of cellular transformation. Acts mainly as an oncoprotein by stimulating the destruction of many host cell key regulatory proteins. E6 associates with host UBE3A/E6-AP ubiquitin-protein ligase, and inactivates tumor suppressors TP53 and TP73 by targeting them to the 26S proteasome for degradation. In turn, DNA damage and chromosomal instabilities increase and lead to cell proliferation and cancer development. The complex E6/E6AP targets several other substrates to degradation via the proteasome including host DLG1 or NFX1, a repressor of human telomerase reverse transcriptase (hTERT). The resulting increased expression of hTERT prevents the shortening of telomere length leading to cell immortalization. Other cellular targets including BAK1, Fas-associated death domain-containing protein (FADD) and procaspase 8, are degraded by E6/E6AP causing inhibition of apoptosis. E6 also inhibits immune response by interacting with host IRF3 and TYK2. These interactions prevent IRF3 transcriptional activities and inhibit TYK2-mediated JAK-STAT activation by interferon alpha resulting in inhibition of the interferon signaling pathway. The protein is Protein E6 of Homo sapiens (Human).